Here is a 317-residue protein sequence, read N- to C-terminus: Pinoresinol reductase 1 (317 aa).

Positions 18, 20, 21, 41, 50, 90, 91, 95, 98, 121, and 122 each coordinate NADP(+). Methionine 125 is a (-)-pinoresinol binding site. Positions 144 and 166 each coordinate NADP(+). Lysine 144 serves as the catalytic Proton acceptor. Residues methionine 177 and valine 178 each contribute to the (-)-pinoresinol site.

The protein belongs to the NmrA-type oxidoreductase family. Isoflavone reductase subfamily. In terms of assembly, forms homodimers. In terms of tissue distribution, expressed in roots and stems.

It catalyses the reaction (-)-lariciresinol + NADP(+) = (-)-pinoresinol + NADPH + H(+). The catalysed reaction is (+)-lariciresinol + NADP(+) = (+)-pinoresinol + NADPH + H(+). Reductase involved in lignan biosynthesis. Involved in secondary cell wall biosynthesis in fiber cells. Unlike conventional pinoresinol reductases that can reduce both pinoresinol and lariciresinol, PRR1 shows a strict substrate preference toward pinoresinol. Active on both (+) and (-)-pinoresinol. Abstracts the 4R-hydride from the NADPH cofactor during catalysis. The polypeptide is Pinoresinol reductase 1 (Arabidopsis thaliana (Mouse-ear cress)).